A 70-amino-acid polypeptide reads, in one-letter code: DNA-directed RNA polymerase subunit epsilon (70 aa).

This sequence belongs to the RNA polymerase subunit epsilon family. RNAP is composed of a core of 2 alpha, a beta and a beta' subunit. The core is associated with a delta subunit, and at least one of epsilon or omega. When a sigma factor is associated with the core the holoenzyme is formed, which can initiate transcription.

It catalyses the reaction RNA(n) + a ribonucleoside 5'-triphosphate = RNA(n+1) + diphosphate. Functionally, a non-essential component of RNA polymerase (RNAP). This chain is DNA-directed RNA polymerase subunit epsilon, found in Lacticaseibacillus casei (strain BL23) (Lactobacillus casei).